A 211-amino-acid chain; its full sequence is Protein-L-isoaspartate O-methyltransferase (211 aa).

The active site involves Ser62.

The protein belongs to the methyltransferase superfamily. L-isoaspartyl/D-aspartyl protein methyltransferase family.

It is found in the cytoplasm. It carries out the reaction [protein]-L-isoaspartate + S-adenosyl-L-methionine = [protein]-L-isoaspartate alpha-methyl ester + S-adenosyl-L-homocysteine. Functionally, catalyzes the methyl esterification of L-isoaspartyl residues in peptides and proteins that result from spontaneous decomposition of normal L-aspartyl and L-asparaginyl residues. It plays a role in the repair and/or degradation of damaged proteins. The chain is Protein-L-isoaspartate O-methyltransferase from Shewanella woodyi (strain ATCC 51908 / MS32).